Consider the following 268-residue polypeptide: Enoyl-[acyl-carrier-protein] reductase [NADH] (268 aa).

NAD(+)-binding positions include 20–21 (SI), 64–65 (DV), and 95–96 (IA). Tyrosine 157 contacts substrate. Positions 164 and 193 each coordinate NAD(+).

Belongs to the short-chain dehydrogenases/reductases (SDR) family. FabI subfamily. In terms of assembly, homodimer. Homotetramer.

It carries out the reaction a 2,3-saturated acyl-[ACP] + NAD(+) = a (2E)-enoyl-[ACP] + NADH + H(+). It catalyses the reaction a 2,3-saturated acyl-CoA + NAD(+) = a (2E)-enoyl-CoA + NADH + H(+). The protein operates within lipid metabolism; mycolic acid biosynthesis. Enoyl-ACP reductase of the type II fatty acid syntase (FAS-II) system, which is involved in the biosynthesis of mycolic acids, a major component of mycobacterial cell walls. Catalyzes the NADH-dependent reduction of the double bond of 2-trans-enoyl-[acyl-carrier protein], an essential step in the fatty acid elongation cycle of the FAS-II pathway. Shows preference for long-chain fatty acyl thioester substrates, and can also use 2-trans-enoyl-CoAs as alternative substrates. The mycobacterial FAS-II system utilizes the products of the FAS-I system as primers to extend fatty acyl chain lengths up to C56, forming the meromycolate chain that serves as the precursor for final mycolic acids. The sequence is that of Enoyl-[acyl-carrier-protein] reductase [NADH] from Mycobacterium avium.